A 463-amino-acid chain; its full sequence is Glucagon-like peptide 1 receptor (463 aa).

The N-terminal stretch at 1–21 (MASTPSLLRLALLLLGAVGRA) is a signal peptide. At 22 to 139 (GPRPQGTTVS…KRGERNFPEE (118 aa)) the chain is on the extracellular side. Intrachain disulfides connect Cys-46–Cys-71, Cys-62–Cys-104, and Cys-85–Cys-126. Asn-63, Asn-82, and Asn-115 each carry an N-linked (GlcNAc...) asparagine glycan. The chain crosses the membrane as a helical span at residues 140 to 164 (QLLSLYIIYTVGYALSFSALVIASA). The Cytoplasmic portion of the chain corresponds to 165-175 (ILVGFRHLHCT). A helical transmembrane segment spans residues 176-201 (RNYIHLNLFASFILRALSVFIKDAAL). Over 202–227 (KWMYSTAAQQHQWDGLLSYQDSLGCR) the chain is Extracellular. Cys-226 and Cys-296 are disulfide-bonded. A helical transmembrane segment spans residues 228–251 (LVFLLMQYCVAANYYWLLVEGVYL). The Cytoplasmic segment spans residues 252–265 (YTLLAFSVFSEQRI). Residues 266-290 (FKLYLSIGWGVPLLFVIPWGIVKYL) form a helical membrane-spanning segment. Residues 291 to 305 (YEDEGCWTRNSNMNY) are Extracellular-facing. Residues 306 to 328 (WLIIRLPILFAIGVNFLIFIRVI) traverse the membrane as a helical segment. At 329-348 (CIVVSKLKANLMCKTDIKCR) the chain is on the cytoplasmic side. Cys-341 bears the ADP-ribosylcysteine mark. Arg-348 is modified (ADP-ribosylarginine). Residues 349-370 (LAKSTLTLIPLLGTHEVIFAFV) form a helical membrane-spanning segment. The interval 352-355 (STLT) is important for allosteric inhibitor binding. Residues 371–383 (MDEHARGTLRFIK) are Extracellular-facing. Residues 384-404 (LFTELSFTSFQGLMVAILYCF) traverse the membrane as a helical segment. Residues 405 to 463 (VNNEVQMEFRKCWERWRLEHLNIQRDCSMKPLKCPTSSVSSGATVGSSVYAATCQSSYS) are Cytoplasmic-facing.

This sequence belongs to the G-protein coupled receptor 2 family. As to quaternary structure, may form homodimers and heterodimers with GIPR. In terms of processing, N-glycosylation enhances cell surface expression and lengthens receptor half-life by preventing degradation in the ER. Detected in pancreatic islets (at protein level). Detected in pancreatic islets and lungs.

It localises to the cell membrane. Its function is as follows. G-protein coupled receptor for glucagon-like peptide 1 (GLP-1). Ligand binding triggers activation of a signaling cascade that leads to the activation of adenylyl cyclase and increased intracellular cAMP levels. Plays a role in regulating insulin secretion in response to GLP-1. The chain is Glucagon-like peptide 1 receptor (Glp1r) from Mus musculus (Mouse).